The chain runs to 461 residues: Cysteine--tRNA ligase (461 aa).

Cys28 contacts Zn(2+). The 'HIGH' region signature appears at 30 to 40 (ITIYDLCHIGH). Residues Cys209, His234, and Glu238 each coordinate Zn(2+). A 'KMSKS' region motif is present at residues 266 to 270 (KMSKS). Lys269 lines the ATP pocket.

It belongs to the class-I aminoacyl-tRNA synthetase family. In terms of assembly, monomer. Zn(2+) serves as cofactor.

The protein resides in the cytoplasm. The catalysed reaction is tRNA(Cys) + L-cysteine + ATP = L-cysteinyl-tRNA(Cys) + AMP + diphosphate. The chain is Cysteine--tRNA ligase from Yersinia enterocolitica serotype O:8 / biotype 1B (strain NCTC 13174 / 8081).